Consider the following 145-residue polypeptide: Endoribonuclease YbeY (145 aa).

Positions 109, 113, and 119 each coordinate Zn(2+).

This sequence belongs to the endoribonuclease YbeY family. It depends on Zn(2+) as a cofactor.

The protein resides in the cytoplasm. Single strand-specific metallo-endoribonuclease involved in late-stage 70S ribosome quality control and in maturation of the 3' terminus of the 16S rRNA. The protein is Endoribonuclease YbeY of Vesicomyosocius okutanii subsp. Calyptogena okutanii (strain HA).